The sequence spans 200 residues: UPF0301 protein BruAb1_0502 (200 aa).

It belongs to the UPF0301 (AlgH) family.

The chain is UPF0301 protein BruAb1_0502 from Brucella abortus biovar 1 (strain 9-941).